A 372-amino-acid polypeptide reads, in one-letter code: Mitogen-activated protein kinase spk1 (372 aa).

Over residues 1–25 (MASATSTPTIADGNSNKESVATSRS) the composition is skewed to polar residues. The disordered stretch occupies residues 1–29 (MASATSTPTIADGNSNKESVATSRSPHTH). Positions 39–327 (YEMINLIGQG…AEEALKHPYV (289 aa)) constitute a Protein kinase domain. ATP is bound by residues 45–53 (IGQGAYGVV) and Lys68. The Proton acceptor role is filled by Asp163. Phosphothreonine is present on Thr199. A TXY motif is present at residues 199 to 201 (TEY). Phosphotyrosine is present on Tyr201.

It belongs to the protein kinase superfamily. CMGC Ser/Thr protein kinase family. MAP kinase subfamily. Mg(2+) serves as cofactor. In terms of processing, dually phosphorylated on Thr-199 and Tyr-201, which activates the enzyme.

It is found in the nucleus. It carries out the reaction L-seryl-[protein] + ATP = O-phospho-L-seryl-[protein] + ADP + H(+). The catalysed reaction is L-threonyl-[protein] + ATP = O-phospho-L-threonyl-[protein] + ADP + H(+). Its activity is regulated as follows. Activated by tyrosine and threonine phosphorylation. Its function is as follows. Involved in mating signal transduction pathway. The sequence is that of Mitogen-activated protein kinase spk1 (spk1) from Schizosaccharomyces pombe (strain 972 / ATCC 24843) (Fission yeast).